A 249-amino-acid chain; its full sequence is Adapter protein MecA (249 aa).

This sequence belongs to the MecA family. As to quaternary structure, homodimer.

Enables the recognition and targeting of unfolded and aggregated proteins to the ClpC protease or to other proteins involved in proteolysis. In Streptococcus thermophilus (strain CNRZ 1066), this protein is Adapter protein MecA.